A 583-amino-acid chain; its full sequence is 2-succinyl-5-enolpyruvyl-6-hydroxy-3-cyclohexene-1-carboxylate synthase (583 aa).

The protein belongs to the TPP enzyme family. MenD subfamily. As to quaternary structure, homodimer. Mg(2+) is required as a cofactor. It depends on Mn(2+) as a cofactor. Thiamine diphosphate serves as cofactor.

It carries out the reaction isochorismate + 2-oxoglutarate + H(+) = 5-enolpyruvoyl-6-hydroxy-2-succinyl-cyclohex-3-ene-1-carboxylate + CO2. The protein operates within quinol/quinone metabolism; 1,4-dihydroxy-2-naphthoate biosynthesis; 1,4-dihydroxy-2-naphthoate from chorismate: step 2/7. It functions in the pathway cofactor biosynthesis; phylloquinone biosynthesis. Catalyzes the thiamine diphosphate-dependent decarboxylation of 2-oxoglutarate and the subsequent addition of the resulting succinic semialdehyde-thiamine pyrophosphate anion to isochorismate to yield 2-succinyl-5-enolpyruvyl-6-hydroxy-3-cyclohexene-1-carboxylate (SEPHCHC). The chain is 2-succinyl-5-enolpyruvyl-6-hydroxy-3-cyclohexene-1-carboxylate synthase from Nostoc sp. (strain PCC 7120 / SAG 25.82 / UTEX 2576).